The primary structure comprises 193 residues: Acyl carrier protein phosphodiesterase (193 aa).

It belongs to the AcpH family.

It carries out the reaction holo-[ACP] + H2O = apo-[ACP] + (R)-4'-phosphopantetheine + H(+). Its function is as follows. Converts holo-ACP to apo-ACP by hydrolytic cleavage of the phosphopantetheine prosthetic group from ACP. The sequence is that of Acyl carrier protein phosphodiesterase from Yersinia pestis.